The following is a 201-amino-acid chain: Peroxiredoxin prdx-2 (201 aa).

Residues 10-168 form the Thioredoxin domain; sequence AFIGKPAPQF…TLRLVQAFQF (159 aa). The Cysteine sulfenic acid (-SOH) intermediate role is filled by Cys-55.

Belongs to the peroxiredoxin family. AhpC/Prx1 subfamily. As to quaternary structure, monomer and homodimer; disulfide-linked. Under nonstress conditions, present in the reduced monomeric form. Forms active hyperoxidized monomers and disulfide-linked homodimers upon oxidation by hydrogen peroxide. Forms active oxidized homodimers in response to the drug metformin. In terms of processing, the enzyme can be inactivated by further oxidation of the cysteine sulfenic acid (C(P)-SOH) to sulphinic acid (C(P)-SO2H) instead of its condensation to a disulfide bond. In terms of tissue distribution, expressed in the gonad, neurons and intestine (at protein level). Expressed in the pharyngeal inter-neuron I4 and the sensory interneuron I2. Expressed in the intestine, pharyngeal muscle 1, vulval muscle, body wall muscle, epithelial cells e1 and e3, and neurons in the head and tail.

It localises to the cytoplasm. It carries out the reaction a hydroperoxide + [thioredoxin]-dithiol = an alcohol + [thioredoxin]-disulfide + H2O. Its activity is regulated as follows. Activated following oxidation of the conserved redox-active cysteine residue, which subsequently allows for the oxidation and activation of substrates. Its function is as follows. Thiol-specific peroxidase that catalyzes the reduction of hydrogen peroxide and organic hydroperoxides to water and alcohols, respectively. In I2 pharyngeal neurons, required for the inhibition of feeding in response to light and hydrogen peroxide. In the intestine, plays a role in protecting cells against oxidative stress by detoxifying peroxides such as hydrogen peroxide. In addition, plays a role in the recovery from oxidative stress induced by hydrogen peroxide. In its hyperoxidized form (induced by hydrogen peroxide), confers protection against heat stress. However, has a low tendency for overoxidation during the normal lifespan. Increases sensitivity to cytotoxicity caused by metalloids and heavy metals such as arsenic and cadmium by playing a role in inhibiting the expression of phase II detoxification genes such as gcs-1 in intestinal cells. In addition, in response to arsenite, promotes the secretion of the insulin ligand daf-28 into the pseudocoelom, which negatively regulates the activities of daf-16 and skn-1. Plays a role in promoting longevity. Plays a role in the mitohormetic pathway by promoting the activation of pmk-1 in response to the drug metformin. The chain is Peroxiredoxin prdx-2 from Caenorhabditis elegans.